A 435-amino-acid chain; its full sequence is NADH-quinone oxidoreductase subunit D (435 aa).

It belongs to the complex I 49 kDa subunit family. In terms of assembly, NDH-1 is composed of 14 different subunits. Subunits NuoB, C, D, E, F, and G constitute the peripheral sector of the complex.

It localises to the cell membrane. The enzyme catalyses a quinone + NADH + 5 H(+)(in) = a quinol + NAD(+) + 4 H(+)(out). Its function is as follows. NDH-1 shuttles electrons from NADH, via FMN and iron-sulfur (Fe-S) centers, to quinones in the respiratory chain. The immediate electron acceptor for the enzyme in this species is believed to be ubiquinone. Couples the redox reaction to proton translocation (for every two electrons transferred, four hydrogen ions are translocated across the cytoplasmic membrane), and thus conserves the redox energy in a proton gradient. This is NADH-quinone oxidoreductase subunit D from Stenotrophomonas maltophilia (strain K279a).